Consider the following 368-residue polypeptide: 3-dehydroquinate synthase (368 aa).

Residues 71–76 (DGEAFK), 105–109 (GVVGD), 129–130 (TT), Lys-142, Lys-151, and 169–172 (TLRT) each bind NAD(+). Glu-184, His-247, and His-264 together coordinate Zn(2+).

Belongs to the sugar phosphate cyclases superfamily. Dehydroquinate synthase family. Requires Co(2+) as cofactor. It depends on Zn(2+) as a cofactor. NAD(+) serves as cofactor.

It localises to the cytoplasm. The enzyme catalyses 7-phospho-2-dehydro-3-deoxy-D-arabino-heptonate = 3-dehydroquinate + phosphate. Its pathway is metabolic intermediate biosynthesis; chorismate biosynthesis; chorismate from D-erythrose 4-phosphate and phosphoenolpyruvate: step 2/7. In terms of biological role, catalyzes the conversion of 3-deoxy-D-arabino-heptulosonate 7-phosphate (DAHP) to dehydroquinate (DHQ). This Cupriavidus necator (strain ATCC 17699 / DSM 428 / KCTC 22496 / NCIMB 10442 / H16 / Stanier 337) (Ralstonia eutropha) protein is 3-dehydroquinate synthase.